The primary structure comprises 109 residues: ATP synthase subunit c (109 aa).

Transmembrane regions (helical) follow at residues 42 to 62 (YIGTGITMLAAGAVGLMQGFS) and 88 to 108 (LALAEAVAIYALIVSILIIFV).

Belongs to the ATPase C chain family. As to quaternary structure, F-type ATPases have 2 components, F(1) - the catalytic core - and F(0) - the membrane proton channel. F(1) has five subunits: alpha(3), beta(3), gamma(1), delta(1), epsilon(1). F(0) has three main subunits: a(1), b(2) and c(10-14). The alpha and beta chains form an alternating ring which encloses part of the gamma chain. F(1) is attached to F(0) by a central stalk formed by the gamma and epsilon chains, while a peripheral stalk is formed by the delta and b chains.

It is found in the cell membrane. Functionally, f(1)F(0) ATP synthase produces ATP from ADP in the presence of a proton or sodium gradient. F-type ATPases consist of two structural domains, F(1) containing the extramembraneous catalytic core and F(0) containing the membrane proton channel, linked together by a central stalk and a peripheral stalk. During catalysis, ATP synthesis in the catalytic domain of F(1) is coupled via a rotary mechanism of the central stalk subunits to proton translocation. In terms of biological role, key component of the F(0) channel; it plays a direct role in translocation across the membrane. A homomeric c-ring of between 10-14 subunits forms the central stalk rotor element with the F(1) delta and epsilon subunits. This is ATP synthase subunit c from Ureaplasma parvum serovar 3 (strain ATCC 27815 / 27 / NCTC 11736).